The chain runs to 335 residues: Methylthioribose-1-phosphate isomerase (335 aa).

Residues 47–49 (RGA), arginine 81, and glutamine 184 contribute to the substrate site. The Proton donor role is filled by aspartate 225. Residue 235 to 236 (NK) coordinates substrate.

It belongs to the eIF-2B alpha/beta/delta subunits family. MtnA subfamily.

It catalyses the reaction 5-(methylsulfanyl)-alpha-D-ribose 1-phosphate = 5-(methylsulfanyl)-D-ribulose 1-phosphate. The protein operates within amino-acid biosynthesis; L-methionine biosynthesis via salvage pathway; L-methionine from S-methyl-5-thio-alpha-D-ribose 1-phosphate: step 1/6. In terms of biological role, catalyzes the interconversion of methylthioribose-1-phosphate (MTR-1-P) into methylthioribulose-1-phosphate (MTRu-1-P). The chain is Methylthioribose-1-phosphate isomerase from Synechococcus sp. (strain CC9902).